The chain runs to 264 residues: S-adenosylmethionine decarboxylase proenzyme (264 aa).

Ser-112 serves as the catalytic Schiff-base intermediate with substrate; via pyruvic acid. Ser-112 bears the Pyruvic acid (Ser); by autocatalysis mark. His-117 functions as the Proton acceptor; for processing activity in the catalytic mechanism. The active-site Proton donor; for catalytic activity is Cys-140.

It belongs to the prokaryotic AdoMetDC family. Type 2 subfamily. In terms of assembly, heterooctamer of four alpha and four beta chains arranged as a tetramer of alpha/beta heterodimers. Requires pyruvate as cofactor. Is synthesized initially as an inactive proenzyme. Formation of the active enzyme involves a self-maturation process in which the active site pyruvoyl group is generated from an internal serine residue via an autocatalytic post-translational modification. Two non-identical subunits are generated from the proenzyme in this reaction, and the pyruvate is formed at the N-terminus of the alpha chain, which is derived from the carboxyl end of the proenzyme. The post-translation cleavage follows an unusual pathway, termed non-hydrolytic serinolysis, in which the side chain hydroxyl group of the serine supplies its oxygen atom to form the C-terminus of the beta chain, while the remainder of the serine residue undergoes an oxidative deamination to produce ammonia and the pyruvoyl group blocking the N-terminus of the alpha chain.

The enzyme catalyses S-adenosyl-L-methionine + H(+) = S-adenosyl 3-(methylsulfanyl)propylamine + CO2. It functions in the pathway amine and polyamine biosynthesis; S-adenosylmethioninamine biosynthesis; S-adenosylmethioninamine from S-adenosyl-L-methionine: step 1/1. In terms of biological role, catalyzes the decarboxylation of S-adenosylmethionine to S-adenosylmethioninamine (dcAdoMet), the propylamine donor required for the synthesis of the polyamines spermine and spermidine from the diamine putrescine. This chain is S-adenosylmethionine decarboxylase proenzyme, found in Hamiltonella defensa subsp. Acyrthosiphon pisum (strain 5AT).